The primary structure comprises 41 residues: Large ribosomal subunit protein bL36 (41 aa).

Belongs to the bacterial ribosomal protein bL36 family.

The sequence is that of Large ribosomal subunit protein bL36 from Methylocella silvestris (strain DSM 15510 / CIP 108128 / LMG 27833 / NCIMB 13906 / BL2).